The primary structure comprises 433 residues: KICSTOR complex protein ITFG2 (433 aa).

An FG-GAP 1; atypical repeat occupies 19 to 48; sequence FPHAICLGDVDNDTLNELVVGDTSGKVSVY. S104 is modified (phosphoserine). The FG-GAP 2; atypical repeat unit spans residues 126–155; that stretch reads NTKVMLISDIDGDGCRELVVGYTDRVVRAF. Position 220 is a phosphoserine (S220).

In terms of assembly, part of the KICSTOR complex composed of KPTN, ITFG2, KICS2 and SZT2. SZT2 probably serves as a link between the other three proteins in the KICSTOR complex and may mediate the direct interaction with the GATOR complex via GATOR1. The KICSTOR complex interacts directly with the GATOR1 complex and most probably indirectly with the GATOR2 complex in an amino acid-independent manner.

It localises to the lysosome membrane. Its function is as follows. As part of the KICSTOR complex functions in the amino acid-sensing branch of the TORC1 signaling pathway. Recruits, in an amino acid-independent manner, the GATOR1 complex to the lysosomal membranes and allows its interaction with GATOR2 and the RAG GTPases. Functions upstream of the RAG GTPases and is required to negatively regulate mTORC1 signaling in absence of amino acids. In absence of the KICSTOR complex mTORC1 is constitutively localized to the lysosome and activated. The KICSTOR complex is also probably involved in the regulation of mTORC1 by glucose. The polypeptide is KICSTOR complex protein ITFG2 (Pongo abelii (Sumatran orangutan)).